A 346-amino-acid chain; its full sequence is UDP-N-acetylenolpyruvoylglucosamine reductase (346 aa).

Residues 18–189 (LRAQARAFIA…VSVVFALKTH (172 aa)) form the FAD-binding PCMH-type domain. The active site involves arginine 165. Serine 240 acts as the Proton donor in catalysis. Glutamate 336 is a catalytic residue.

It belongs to the MurB family. The cofactor is FAD.

The protein resides in the cytoplasm. The catalysed reaction is UDP-N-acetyl-alpha-D-muramate + NADP(+) = UDP-N-acetyl-3-O-(1-carboxyvinyl)-alpha-D-glucosamine + NADPH + H(+). It functions in the pathway cell wall biogenesis; peptidoglycan biosynthesis. Its function is as follows. Cell wall formation. This is UDP-N-acetylenolpyruvoylglucosamine reductase from Neisseria meningitidis serogroup C (strain 053442).